The chain runs to 629 residues: Pentatricopeptide repeat-containing protein At1g62930, chloroplastic (629 aa).

The transit peptide at 1–41 (MTSCVHLGIVASQSKKMSLAKRFAQLRKASPLFSLRGVYFS) directs the protein to the chloroplast. PPR repeat units follow at residues 79–113 (SIVE…RISY), 114–148 (DLYS…GYEP), 149–183 (DIVT…EYQP), 184–218 (NTVT…GCQP), 219–253 (DLFT…KIEA), 254–288 (DVVI…GIRP), 289–323 (NVVT…KINP), 324–358 (NVVT…SIDP), 359–393 (DIFT…DCFP), 394–428 (NVVT…GLVG), 429–463 (NTVT…GVPP), 464–498 (DIIT…KMEP), 499–533 (DIYT…GVKP), 534–568 (NVII…GTLP), and 569–603 (NSGT…GFVG).

It belongs to the PPR family. P subfamily.

The protein resides in the plastid. The protein localises to the chloroplast. The chain is Pentatricopeptide repeat-containing protein At1g62930, chloroplastic from Arabidopsis thaliana (Mouse-ear cress).